Here is a 153-residue protein sequence, read N- to C-terminus: UPF0178 protein Atu1478 (153 aa).

Belongs to the UPF0178 family.

This is UPF0178 protein Atu1478 from Agrobacterium fabrum (strain C58 / ATCC 33970) (Agrobacterium tumefaciens (strain C58)).